Reading from the N-terminus, the 500-residue chain is L-arabinose isomerase (500 aa).

Mn(2+) is bound by residues E306, E333, H350, and H450.

It belongs to the arabinose isomerase family. In terms of assembly, homohexamer. It depends on Mn(2+) as a cofactor.

It carries out the reaction beta-L-arabinopyranose = L-ribulose. Its pathway is carbohydrate degradation; L-arabinose degradation via L-ribulose; D-xylulose 5-phosphate from L-arabinose (bacterial route): step 1/3. Functionally, catalyzes the conversion of L-arabinose to L-ribulose. The polypeptide is L-arabinose isomerase (Shigella dysenteriae serotype 1 (strain Sd197)).